The following is a 197-amino-acid chain: Endoribonuclease YbeY (197 aa).

Residues histidine 156, histidine 160, and histidine 166 each coordinate Zn(2+).

The protein belongs to the endoribonuclease YbeY family. It depends on Zn(2+) as a cofactor.

The protein resides in the cytoplasm. Single strand-specific metallo-endoribonuclease involved in late-stage 70S ribosome quality control and in maturation of the 3' terminus of the 16S rRNA. The sequence is that of Endoribonuclease YbeY from Cupriavidus metallidurans (strain ATCC 43123 / DSM 2839 / NBRC 102507 / CH34) (Ralstonia metallidurans).